An 89-amino-acid chain; its full sequence is Small ribosomal subunit protein uS15 (89 aa).

The protein belongs to the universal ribosomal protein uS15 family. Part of the 30S ribosomal subunit. Forms a bridge to the 50S subunit in the 70S ribosome, contacting the 23S rRNA.

Functionally, one of the primary rRNA binding proteins, it binds directly to 16S rRNA where it helps nucleate assembly of the platform of the 30S subunit by binding and bridging several RNA helices of the 16S rRNA. Its function is as follows. Forms an intersubunit bridge (bridge B4) with the 23S rRNA of the 50S subunit in the ribosome. The chain is Small ribosomal subunit protein uS15 from Corynebacterium kroppenstedtii (strain DSM 44385 / JCM 11950 / CIP 105744 / CCUG 35717).